The primary structure comprises 482 residues: Histone deacetylase 1 (482 aa).

The tract at residues 9 to 321 is histone deacetylase; the sequence is RKVCYYYDGD…WTYETAVALD (313 aa). Gly-27 and Lys-31 together coordinate 1D-myo-inositol 1,4,5,6-tetrakisphosphate. N6-acetyllysine; alternate is present on Lys-74. Lys-74 participates in a covalent cross-link: Glycyl lysine isopeptide (Lys-Gly) (interchain with G-Cter in SUMO2); alternate. The active site involves His-141. Positions 176 and 178 each coordinate Zn(2+). The residue at position 220 (Lys-220) is an N6-acetyllysine. An S-nitrosocysteine modification is found at Cys-261. Asp-264 lines the Zn(2+) pocket. Arg-270 serves as a coordination point for 1D-myo-inositol 1,4,5,6-tetrakisphosphate. An S-nitrosocysteine modification is found at Cys-273. Over residues 390-400 the composition is skewed to acidic residues; it reads PEESGDEDEED. The segment at 390–482 is disordered; it reads PEESGDEDEE…KGVKEEVKLA (93 aa). A phosphoserine mark is found at Ser-393, Ser-406, Ser-409, Ser-421, and Ser-423. The segment covering 401-416 has biased composition (basic and acidic residues); the sequence is PDKRISICSSDKRIAC. The segment covering 417–427 has biased composition (acidic residues); that stretch reads EEEFSDSDEEG. Position 432 is an N6-methylated lysine; by EHMT2 (Lys-432). Lys-438 participates in a covalent cross-link: Glycyl lysine isopeptide (Lys-Gly) (interchain with G-Cter in SUMO2). Residues 443–482 are compositionally biased toward basic and acidic residues; sequence VKTEDEKEKDPEEKKEVTEEEKTKEEKQEAKGVKEEVKLA. Lys-444 is covalently cross-linked (Glycyl lysine isopeptide (Lys-Gly) (interchain with G-Cter in SUMO2); alternate). A Glycyl lysine isopeptide (Lys-Gly) (interchain with G-Cter in SUMO); alternate cross-link involves residue Lys-444. Glycyl lysine isopeptide (Lys-Gly) (interchain with G-Cter in SUMO2) cross-links involve residues Lys-456, Lys-457, and Lys-473. A Glycyl lysine isopeptide (Lys-Gly) (interchain with G-Cter in SUMO2); alternate cross-link involves residue Lys-476. A Glycyl lysine isopeptide (Lys-Gly) (interchain with G-Cter in SUMO); alternate cross-link involves residue Lys-476. A Glycyl lysine isopeptide (Lys-Gly) (interchain with G-Cter in SUMO2) cross-link involves residue Lys-480.

This sequence belongs to the histone deacetylase family. HD type 1 subfamily. As to quaternary structure, part of the core histone deacetylase (HDAC) complex composed of HDAC1, HDAC2, RBBP4 and RBBP7, the core complex associates with SIN3, SAP18 and SAP30 to form the SIN3 HDAC complex. Component of the nucleosome remodeling and deacetylase (NuRD) repressor complex, composed of core proteins MTA1, MTA2, MTA3, RBBP4, RBBP7, HDAC1, HDAC2, MBD2, MBD3, and peripherally associated proteins CDK2AP1, CDK2AP2, GATAD2A, GATAD2B, CHD3, CHD4 and CHD5. The exact stoichiometry of the NuRD complex is unknown, and some subunits such as MBD2 and MBD3, GATAD2A and GATAD2B, and CHD3, CHD4 and CHD5 define mutually exclusive NuRD complexes. Component of a BHC histone deacetylase complex that contains HDAC1, HDAC2, HMG20B/BRAF35, KDM1A, RCOR1/CoREST and PHF21A/BHC80. The BHC complex may also contain ZMYM2, ZNF217, ZMYM3, GSE1 and GTF2I. Component of a mSin3A corepressor complex that contains SIN3A, SAP130, SUDS3/SAP45, ARID4B/SAP180, HDAC1 and HDAC2. Found in a trimeric complex with APBB1 and TSHZ3; the interaction between HDAC1 and APBB1 is mediated by TSHZ3. Forms a complex comprising APPL1, RUVBL2, APPL2, CTNNB1 and HDAC2. Component of a RCOR/GFI/KDM1A/HDAC complex. Part of a complex composed of TRIM28, HDAC1, HDAC2 and EHMT2. Part of a complex containing at least CDYL, MIER1, MIER2, HDAC1 and HDAC2. The large PER complex involved in the histone deacetylation is composed of at least HDAC1, PER2, SFPQ and SIN3A. Associates with the 9-1-1 complex; interacts with HUS1. Found in a complex with DNMT3A and HDAC7. Found in a complex with YY1, SIN3A and GON4L. Identified in a histone deacetylase complex that contains DNTTIP1, HDAC1 and MIDEAS; this complex assembles into a tetramer that contains four copies of each protein chain. Found in a complex composed of at least SINHCAF, SIN3A, HDAC1, SAP30, RBBP4, OGT and TET1. Component of the SIN3B complex, which includes SIN3B, HDAC1, PHF12 and MORF4L1. Interacts with GFI1; the interaction is direct. Interacts directly with GFI1B. Interacts with TSHZ3 (via N-terminus); the interaction is direct. Interacts with APEX1; the interaction is not dependent on the acetylated status of APEX1. Interacts with BANP. Interacts with BAZ2A/TIP5. Interacts with BCL6. Interacts with BCOR. Interacts with BHLHE40/DEC1. Interacts with BRCC3; this interaction is enhanced in the presence of PWWP2B. Interacts with BRMS1. Interacts with BRMS1L. Interacts with C10orf90/FATS (via its N-terminal); the interaction prevents binding of HDAC1 to CDKN1A/p21 and facilitates the acetylation and stabilization of CDKN1A/p21. Interacts with CBFA2T3. Interacts with CCAR2. Interacts with CDK2AP1. Interacts with CHD3. Interacts with CHD4. Interacts with CHFR. Interacts with CIART. Interacts with CDKN1A/p21. Interacts with CDK5 complexed to CDK5R1 (p25). Interacts with CRY1. Interacts with DAXX. Interacts with DDIT3/CHOP. Interacts with DDX5. Interacts with DHX36; this interaction occurs in a RNA-dependent manner. Interacts with DNMT1. Interacts with DNTTIP1. Interacts with E4F1. Interacts with EP300. Interacts with ERCC6. Interacts with GATAD2A. Interacts with HCFC1. Interacts with HDAC9. Interacts with HUS1. Interacts with INSM1. Interacts with KDM4A. Interacts with KDM5A; this interaction impairs histone deacetylation. Interacts with KDM5B. Interacts with KLF1. Interacts with MBD3L2. Interacts with MIER1. Interacts with NFE4. Interacts with NR4A2/NURR1. Interacts with NR1D2 (via C-terminus). Interacts with NRIP1. Interacts with NSD2. Interacts with PACS2. Interacts with PHB2. Interacts with PPHLN1. Interacts with PRDM6. Interacts with PRDM16. Interacts with PWWP2A in a MTA1-dependent manner. Interacts with PWWP2B. Interacts with RB1. Interacts with RERE. Interacts with SANBR (via the BTB domain). Interacts with SAMSN1. Interacts with SAP30L. Interacts with SETDB1. Interacts with SIN3A. Interacts with SMAD3. Interacts with SMAD4; positively regulated by ZBTB7A. Interacts with SMARCAD1. Interacts with SMARCA4/BRG1. Interacts with SMYD2. Interacts with SMYD4 (via MYND-type zinc finger). Interacts with SP1; the interaction deacetylates SP1 and regulates its transcriptional activity. Interacts with SP3; the interaction deacetylates SP3 and regulates its transcriptional activity. In vitro, C(18) ceramides increase this interaction and the subsequent SP3 deacetylation and SP3-mediated repression of the TERT promoter. Interacts with SPEN/MINT. Interacts with SPHK2. Interacts with SUV39H1. Interacts with TGIF. Interacts with TGIF2. Interacts with TRAF6. Interacts with TRIM28; the interaction recruits HDAC1 to E2F1 and inhibits its acetylation. Interacts with TSC22D3 isoform 1; this interaction affects HDAC1 activity on MYOG promoter and thus inhibits MYOD1 transcriptional activity. Interacts with UHRF1. Interacts with UHRF2. Interacts with ZBTB7A. Interacts with ZMYND8. Interacts with ZMYND15. Interacts with ZNF431. Interacts with ZNF516; this interaction is enhanced in the presence of PWWP2B. Interacts with ZNF541. Interacts with ZNF638. Interacts with ZNHIT1. Interacts with the non-histone region of MACROH2A1. Identified in a complex with HDAC2, KCTD19, DNTTIP1 and ZNF541. Interacts with MSX3. Interacts with VRK1. The cofactor is Zn(2+). Sumoylated on Lys-444 and Lys-476; which promotes enzymatic activity. Desumoylated by SENP1. Post-translationally, phosphorylation on Ser-421 and Ser-423 promotes enzymatic activity and interactions with NuRD and SIN3 complexes. Phosphorylated by CDK5. In terms of processing, ubiquitinated by CHFR and KCTD11, leading to its degradation by the proteasome.

Its subcellular location is the nucleus. It carries out the reaction N(6)-acetyl-L-lysyl-[histone] + H2O = L-lysyl-[histone] + acetate. The enzyme catalyses N(6)-acetyl-L-lysyl-[protein] + H2O = L-lysyl-[protein] + acetate. The catalysed reaction is N(6)-(2E)-butenoyl-L-lysyl-[protein] + H2O = (2E)-2-butenoate + L-lysyl-[protein]. It catalyses the reaction N(6)-[(S)-lactoyl]-L-lysyl-[protein] + H2O = (S)-lactate + L-lysyl-[protein]. Inositol tetraphosphate (1D-myo-inositol 1,4,5,6-tetrakisphosphate) may act as an intermolecular glue between HDAC1 and N-Cor repressor complex components. Its function is as follows. Histone deacetylase that catalyzes the deacetylation of lysine residues on the N-terminal part of the core histones (H2A, H2B, H3 and H4). Histone deacetylation gives a tag for epigenetic repression and plays an important role in transcriptional regulation, cell cycle progression and developmental events. Histone deacetylases act via the formation of large multiprotein complexes. Acts as a component of the histone deacetylase NuRD complex which participates in the remodeling of chromatin. As part of the SIN3B complex is recruited downstream of the constitutively active genes transcriptional start sites through interaction with histones and mitigates histone acetylation and RNA polymerase II progression within transcribed regions contributing to the regulation of transcription. Also functions as a deacetylase for non-histone targets, such as NR1D2, RELA, SP1, SP3, STAT3 and TSHZ3. Deacetylates SP proteins, SP1 and SP3, and regulates their function. Component of the BRG1-RB1-HDAC1 complex, which negatively regulates the CREST-mediated transcription in resting neurons. Upon calcium stimulation, HDAC1 is released from the complex and CREBBP is recruited, which facilitates transcriptional activation. Deacetylates TSHZ3 and regulates its transcriptional repressor activity. Deacetylates 'Lys-310' in RELA and thereby inhibits the transcriptional activity of NF-kappa-B. Deacetylates NR1D2 and abrogates the effect of KAT5-mediated relieving of NR1D2 transcription repression activity. Component of a RCOR/GFI/KDM1A/HDAC complex that suppresses, via histone deacetylase (HDAC) recruitment, a number of genes implicated in multilineage blood cell development. Involved in CIART-mediated transcriptional repression of the circadian transcriptional activator: CLOCK-BMAL1 heterodimer. Required for the transcriptional repression of circadian target genes, such as PER1, mediated by the large PER complex or CRY1 through histone deacetylation. In addition to protein deacetylase activity, also has protein-lysine deacylase activity: acts as a protein decrotonylase and delactylase by mediating decrotonylation ((2E)-butenoyl) and delactylation (lactoyl) of histones, respectively. The polypeptide is Histone deacetylase 1 (HDAC1) (Bos taurus (Bovine)).